Reading from the N-terminus, the 183-residue chain is Shikimate kinase (183 aa).

18-23 (GVGKTT) serves as a coordination point for ATP. Thr-22 serves as a coordination point for Mg(2+). Asp-40, Arg-64, and Gly-86 together coordinate substrate. An ATP-binding site is contributed by Arg-125. Residue Arg-143 coordinates substrate.

The protein belongs to the shikimate kinase family. Monomer. The cofactor is Mg(2+).

It is found in the cytoplasm. The enzyme catalyses shikimate + ATP = 3-phosphoshikimate + ADP + H(+). It participates in metabolic intermediate biosynthesis; chorismate biosynthesis; chorismate from D-erythrose 4-phosphate and phosphoenolpyruvate: step 5/7. In terms of biological role, catalyzes the specific phosphorylation of the 3-hydroxyl group of shikimic acid using ATP as a cosubstrate. The chain is Shikimate kinase from Oceanobacillus iheyensis (strain DSM 14371 / CIP 107618 / JCM 11309 / KCTC 3954 / HTE831).